The chain runs to 862 residues: Probable glutaminase ARB_05535/05536 (862 aa).

An N-terminal signal peptide occupies residues 1-19 (MLSWVLLAWAVACSALAGA). N-linked (GlcNAc...) asparagine glycosylation is found at Asn106, Asn273, Asn436, Asn448, Asn486, Asn610, and Asn744. A disordered region spans residues 798–862 (FLDDKDNNSP…SQMTIVNEND (65 aa)). The segment covering 853-862 (SQMTIVNEND) has biased composition (polar residues).

Belongs to the fungal glutaminase gtaA family.

Its subcellular location is the secreted. The catalysed reaction is L-glutamine + H2O = L-glutamate + NH4(+). In terms of biological role, glutaminase catalyzes the hydrolysis of glutamine to glutamic acid and plays a key role in nitrogen metabolism. The protein is Probable glutaminase ARB_05535/05536 of Arthroderma benhamiae (strain ATCC MYA-4681 / CBS 112371) (Trichophyton mentagrophytes).